We begin with the raw amino-acid sequence, 874 residues long: Translation initiation factor IF-2 (874 aa).

Residues 1-262 (MEDKNKTIKE…EKSTSDRDFS (262 aa)) are disordered. Positions 54–63 (SKPPVMPLPL) are enriched in pro residues. Residues 83 to 104 (AKREESPGKQDAGRPPRDKDTR) show a composition bias toward basic and acidic residues. The span at 141-222 (SGGGYQGNRG…NRGPRSGGTG (82 aa)) shows a compositional bias: gly residues. The span at 235–244 (LSQSRGSSVT) shows a compositional bias: polar residues. The segment covering 250–262 (HDKEKSTSDRDFS) has biased composition (basic and acidic residues). The 170-residue stretch at 369–538 (NRPPVVTIMG…LLQAEVMDLK (170 aa)) folds into the tr-type G domain. The G1 stretch occupies residues 378 to 385 (GHVDHGKT). 378-385 (GHVDHGKT) contributes to the GTP binding site. Positions 403–407 (GITQH) are G2. Residues 424–427 (DTPG) form a G3 region. Residues 424–428 (DTPGH) and 478–481 (NKID) contribute to the GTP site. The tract at residues 478–481 (NKID) is G4. Residues 514–516 (SAR) are G5.

It belongs to the TRAFAC class translation factor GTPase superfamily. Classic translation factor GTPase family. IF-2 subfamily.

It is found in the cytoplasm. Its function is as follows. One of the essential components for the initiation of protein synthesis. Protects formylmethionyl-tRNA from spontaneous hydrolysis and promotes its binding to the 30S ribosomal subunits. Also involved in the hydrolysis of GTP during the formation of the 70S ribosomal complex. The sequence is that of Translation initiation factor IF-2 from Leptospira interrogans serogroup Icterohaemorrhagiae serovar copenhageni (strain Fiocruz L1-130).